The chain runs to 339 residues: Glycerol-3-phosphate dehydrogenase [NAD(P)+] (339 aa).

S14, Y15, H35, and K109 together coordinate NADPH. 3 residues coordinate sn-glycerol 3-phosphate: K109, G138, and T140. Residue A142 participates in NADPH binding. Sn-glycerol 3-phosphate-binding residues include K194, D247, S257, R258, and N259. K194 (proton acceptor) is an active-site residue. Residue R258 coordinates NADPH. Positions 282 and 284 each coordinate NADPH.

It belongs to the NAD-dependent glycerol-3-phosphate dehydrogenase family.

The protein localises to the cytoplasm. It catalyses the reaction sn-glycerol 3-phosphate + NAD(+) = dihydroxyacetone phosphate + NADH + H(+). The enzyme catalyses sn-glycerol 3-phosphate + NADP(+) = dihydroxyacetone phosphate + NADPH + H(+). Its pathway is membrane lipid metabolism; glycerophospholipid metabolism. Catalyzes the reduction of the glycolytic intermediate dihydroxyacetone phosphate (DHAP) to sn-glycerol 3-phosphate (G3P), the key precursor for phospholipid synthesis. The protein is Glycerol-3-phosphate dehydrogenase [NAD(P)+] of Shewanella amazonensis (strain ATCC BAA-1098 / SB2B).